The following is a 424-amino-acid chain: Histidine--tRNA ligase (424 aa).

This sequence belongs to the class-II aminoacyl-tRNA synthetase family. As to quaternary structure, homodimer.

It localises to the cytoplasm. It catalyses the reaction tRNA(His) + L-histidine + ATP = L-histidyl-tRNA(His) + AMP + diphosphate + H(+). The chain is Histidine--tRNA ligase from Salmonella heidelberg (strain SL476).